The sequence spans 297 residues: tRNA uridine(34) hydroxylase (297 aa).

One can recognise a Rhodanese domain in the interval 133-228 (SGDEVVFFDG…YGETFKDQGL (96 aa)). The active-site Cysteine persulfide intermediate is C188.

It belongs to the TrhO family.

It catalyses the reaction uridine(34) in tRNA + AH2 + O2 = 5-hydroxyuridine(34) in tRNA + A + H2O. Its function is as follows. Catalyzes oxygen-dependent 5-hydroxyuridine (ho5U) modification at position 34 in tRNAs. The protein is tRNA uridine(34) hydroxylase of Pseudarthrobacter chlorophenolicus (strain ATCC 700700 / DSM 12829 / CIP 107037 / JCM 12360 / KCTC 9906 / NCIMB 13794 / A6) (Arthrobacter chlorophenolicus).